The sequence spans 123 residues: Hydrogenase maturation factor HypA (123 aa).

H2 provides a ligand contact to Ni(2+). The Zn(2+) site is built by C73, C76, C90, and C93.

This sequence belongs to the HypA/HybF family.

Functionally, involved in the maturation of [NiFe] hydrogenases. Required for nickel insertion into the metal center of the hydrogenase. This is Hydrogenase maturation factor HypA from Roseiflexus sp. (strain RS-1).